Consider the following 213-residue polypeptide: A-type ATP synthase subunit D (213 aa).

The protein belongs to the V-ATPase D subunit family. As to quaternary structure, has multiple subunits with at least A(3), B(3), C, D, E, F, H, I and proteolipid K(x).

It is found in the cell membrane. Its function is as follows. Component of the A-type ATP synthase that produces ATP from ADP in the presence of a proton gradient across the membrane. The sequence is that of A-type ATP synthase subunit D from Saccharolobus islandicus (strain L.S.2.15 / Lassen #1) (Sulfolobus islandicus).